We begin with the raw amino-acid sequence, 444 residues long: Chitinase-like protein Idgf1 (444 aa).

A signal peptide spans 1–20; that stretch reads MTSLLFVILNIILTLHLCAG. One can recognise a GH18 domain in the interval 29–444; it reads KRLICYYDAQ…PILRSVRGHL (416 aa). C33 and C60 form a disulfide bridge. N-linked (GlcNAc...) asparagine glycans are attached at residues N213, N225, and N335. C346 and C429 are joined by a disulfide.

This sequence belongs to the glycosyl hydrolase 18 family. IDGF subfamily. In terms of processing, glycosylated.

The protein resides in the secreted. Cooperates with insulin-like peptides to stimulate the proliferation, polarization and motility of imaginal disk cells. May act by stabilizing the binding of insulin-like peptides to its receptor through a simultaneous interaction with both molecules to form a multiprotein signaling complex. In Glossina morsitans morsitans (Savannah tsetse fly), this protein is Chitinase-like protein Idgf1 (Idgf1).